A 191-amino-acid chain; its full sequence is Peptidyl-tRNA hydrolase (191 aa).

Tyr-17 lines the tRNA pocket. His-22 functions as the Proton acceptor in the catalytic mechanism. 3 residues coordinate tRNA: Tyr-68, Asn-70, and Asn-116.

Belongs to the PTH family. In terms of assembly, monomer.

It localises to the cytoplasm. The enzyme catalyses an N-acyl-L-alpha-aminoacyl-tRNA + H2O = an N-acyl-L-amino acid + a tRNA + H(+). Its function is as follows. Hydrolyzes ribosome-free peptidyl-tRNAs (with 1 or more amino acids incorporated), which drop off the ribosome during protein synthesis, or as a result of ribosome stalling. In terms of biological role, catalyzes the release of premature peptidyl moieties from peptidyl-tRNA molecules trapped in stalled 50S ribosomal subunits, and thus maintains levels of free tRNAs and 50S ribosomes. This Mycolicibacterium smegmatis (strain ATCC 700084 / mc(2)155) (Mycobacterium smegmatis) protein is Peptidyl-tRNA hydrolase.